A 765-amino-acid polypeptide reads, in one-letter code: 5-methyltetrahydropteroyltriglutamate--homocysteine methyltransferase 2 (765 aa).

Positions 18 and 116 each coordinate 5-methyltetrahydropteroyltri-L-glutamate. L-homocysteine-binding positions include 437 to 439 (IGS) and glutamate 490. Residues 437 to 439 (IGS) and glutamate 490 each bind L-methionine. 5-methyltetrahydropteroyltri-L-glutamate is bound by residues aspartate 495, tyrosine 518, 521–522 (RC), and tryptophan 567. Aspartate 605 is a binding site for L-homocysteine. Position 605 (aspartate 605) interacts with L-methionine. Zn(2+) is bound by residues histidine 647, cysteine 649, histidine 658, aspartate 662, and glutamate 671. Histidine 701 functions as the Proton donor in the catalytic mechanism. Cysteine 733 contributes to the Zn(2+) binding site.

The protein belongs to the vitamin-B12 independent methionine synthase family. Zn(2+) is required as a cofactor. Expressed in leaves, stems and siliques.

Its subcellular location is the cytoplasm. The protein localises to the cytosol. It carries out the reaction 5-methyltetrahydropteroyltri-L-glutamate + L-homocysteine = tetrahydropteroyltri-L-glutamate + L-methionine. It functions in the pathway amino-acid biosynthesis; L-methionine biosynthesis via de novo pathway; L-methionine from L-homocysteine (MetE route): step 1/1. Functionally, catalyzes the transfer of a methyl group from 5-methyltetrahydrofolate to homocysteine resulting in methionine formation. The protein is 5-methyltetrahydropteroyltriglutamate--homocysteine methyltransferase 2 (MS2) of Arabidopsis thaliana (Mouse-ear cress).